A 373-amino-acid chain; its full sequence is Methylmalonyl-CoA decarboxylase subunit beta (373 aa).

The next 10 membrane-spanning stretches (helical) occupy residues 17–37 (FLAF…LLYL), 38–58 (AFAR…CLLA), 81–101 (IFPP…PLIA), 106–126 (LLLG…AMML), 132–152 (EAAA…YLAT), 156–176 (PHLL…VPLI), 206–226 (IVFP…ITSL), 257–277 (VTIF…FLSL), 280–300 (IKII…GVLF), and 343–363 (FLLM…AVAA).

It belongs to the GcdB/MmdB/OadB family. As to quaternary structure, the methylmalonyl-CoA decarboxylase is composed of five subunits: the carboxyltransferase alpha subunit (MmdA), the tunnel beta subunit (MmdB), the biotin-containing gamma subunit (MmdC), and the delta (MmdD) and epsilon (MmdE) subunits. Post-translationally, the N-terminus is blocked.

The protein resides in the cell membrane. It carries out the reaction (S)-methylmalonyl-CoA + Na(+)(in) + H(+)(out) = propanoyl-CoA + Na(+)(out) + CO2. With respect to regulation, completely inhibited by avidin. In terms of biological role, tunnel subunit of the sodium ion pump methylmalonyl-CoA decarboxylase, which converts the chemical energy of a decarboxylation reaction into an electrochemical gradient of Na(+) ions across the cytoplasmic membrane, thereby creating a sodium ion motive force that is used for ATP synthesis. The beta subunit catalyzes the decarboxylation of the carboxybiotin carrier protein and the coupled export of Na(+) ions. Can also convert malonyl-CoA into acetyl-CoA. The protein is Methylmalonyl-CoA decarboxylase subunit beta of Veillonella parvula (Staphylococcus parvulus).